A 712-amino-acid chain; its full sequence is Ribosomal RNA large subunit methyltransferase K/L (712 aa).

Residues 42–153 (QALRIVMWSR…KGRASLSIDL (112 aa)) form the THUMP domain.

This sequence belongs to the methyltransferase superfamily. RlmKL family.

It localises to the cytoplasm. The enzyme catalyses guanosine(2445) in 23S rRNA + S-adenosyl-L-methionine = N(2)-methylguanosine(2445) in 23S rRNA + S-adenosyl-L-homocysteine + H(+). It catalyses the reaction guanosine(2069) in 23S rRNA + S-adenosyl-L-methionine = N(2)-methylguanosine(2069) in 23S rRNA + S-adenosyl-L-homocysteine + H(+). Specifically methylates the guanine in position 2445 (m2G2445) and the guanine in position 2069 (m7G2069) of 23S rRNA. The chain is Ribosomal RNA large subunit methyltransferase K/L from Stenotrophomonas maltophilia (strain R551-3).